A 248-amino-acid chain; its full sequence is MPRFRLDIEYDGSLFAGWQHQADQPSVQQAIEQAIEKFCGEAVRLRAAGRTDAGVHASAQVAHVDLAKPWPGDKVRDAVNAHLQAAGAHVAILKAAIVPDDFDARFSATGRHYLYRILNRRAPAALEKGKVWWVPKRLDAGAMHEAAKLLLGRHDFTTFRSTQCQANSPVRTLERLDVSRAGDMIEVRASARSFLHNQVRSMVGSLKRVGDGGWTEAELKAALEARDRAACGQVAPPDGLFLIGVDYP.

Asp52 acts as the Nucleophile in catalysis. Tyr113 is a binding site for substrate.

It belongs to the tRNA pseudouridine synthase TruA family. In terms of assembly, homodimer.

It carries out the reaction uridine(38/39/40) in tRNA = pseudouridine(38/39/40) in tRNA. Functionally, formation of pseudouridine at positions 38, 39 and 40 in the anticodon stem and loop of transfer RNAs. The chain is tRNA pseudouridine synthase A from Mesorhizobium japonicum (strain LMG 29417 / CECT 9101 / MAFF 303099) (Mesorhizobium loti (strain MAFF 303099)).